The sequence spans 224 residues: Holliday junction branch migration complex subunit RuvA (224 aa).

Residues 1–64 (MIGKVAGILD…EDLLQLFGFP (64 aa)) are domain I. The tract at residues 65–143 (TMIEKEWHRL…ALMAMGGGTA (79 aa)) is domain II. Positions 141 to 185 (GTAALAPSEPPEPQPGTSSGSRRKTRAPEPPRPSHTADALSALAN) are disordered. The segment at 144-170 (ALAPSEPPEPQPGTSSGSRRKTRAPEP) is flexible linker. Residues 171–224 (PRPSHTADALSALANLGYQPTDAAQAVAQAAGESPDADTAALIRAALKLLAPKS) form a domain III region.

It belongs to the RuvA family. As to quaternary structure, homotetramer. Forms an RuvA(8)-RuvB(12)-Holliday junction (HJ) complex. HJ DNA is sandwiched between 2 RuvA tetramers; dsDNA enters through RuvA and exits via RuvB. An RuvB hexamer assembles on each DNA strand where it exits the tetramer. Each RuvB hexamer is contacted by two RuvA subunits (via domain III) on 2 adjacent RuvB subunits; this complex drives branch migration. In the full resolvosome a probable DNA-RuvA(4)-RuvB(12)-RuvC(2) complex forms which resolves the HJ.

The protein resides in the cytoplasm. Functionally, the RuvA-RuvB-RuvC complex processes Holliday junction (HJ) DNA during genetic recombination and DNA repair, while the RuvA-RuvB complex plays an important role in the rescue of blocked DNA replication forks via replication fork reversal (RFR). RuvA specifically binds to HJ cruciform DNA, conferring on it an open structure. The RuvB hexamer acts as an ATP-dependent pump, pulling dsDNA into and through the RuvAB complex. HJ branch migration allows RuvC to scan DNA until it finds its consensus sequence, where it cleaves and resolves the cruciform DNA. This chain is Holliday junction branch migration complex subunit RuvA, found in Cereibacter sphaeroides (strain KD131 / KCTC 12085) (Rhodobacter sphaeroides).